A 1072-amino-acid chain; its full sequence is Guanylyl cyclase C (1072 aa).

The signal sequence occupies residues 1–19 (MTSLLGLAVRLLLFQPALM). Over 20 to 433 (VFWASQVRQN…VPGLGPQILM (414 aa)) the chain is Extracellular. 10 N-linked (GlcNAc...) asparagine glycosylation sites follow: asparagine 32, asparagine 75, asparagine 79, asparagine 179, asparagine 188, asparagine 195, asparagine 284, asparagine 307, asparagine 345, and asparagine 402. A helical transmembrane segment spans residues 434-454 (IAVFTLTGILVVLLLIALLVL). At 455–1072 (RKYRRDHALR…NNSDHDSTYF (618 aa)) the chain is on the cytoplasmic side. Residues 489 to 748 (LKIDDDRRRD…KIESTLAKIF (260 aa)) form the Protein kinase domain. One can recognise a Guanylate cyclase domain in the interval 823–953 (TIYFSDIVGF…DTVNTASRME (131 aa)).

Belongs to the adenylyl cyclase class-4/guanylyl cyclase family. As to quaternary structure, homotrimer. Interacts via its C-terminal region with NHERF4. Interacts with the lectin chaperone VIP36. Post-translationally, glycosylation at Asn-75 and/or Asn-79 is required for interaction with VIP36 while glycosylation at Asn-345 and Asn-402 modulates ligand-mediated GC-C activation.

The protein resides in the cell membrane. Its subcellular location is the endoplasmic reticulum membrane. The catalysed reaction is GTP = 3',5'-cyclic GMP + diphosphate. In terms of biological role, guanylyl cyclase that catalyzes synthesis of cyclic GMP (cGMP) from GTP. This is Guanylyl cyclase C (Gucy2c) from Mus musculus (Mouse).